The sequence spans 211 residues: Large ribosomal subunit protein bL25 (211 aa).

The protein belongs to the bacterial ribosomal protein bL25 family. CTC subfamily. As to quaternary structure, part of the 50S ribosomal subunit; part of the 5S rRNA/L5/L18/L25 subcomplex. Contacts the 5S rRNA. Binds to the 5S rRNA independently of L5 and L18.

This is one of the proteins that binds to the 5S RNA in the ribosome where it forms part of the central protuberance. This Anaplasma phagocytophilum (strain HZ) protein is Large ribosomal subunit protein bL25.